We begin with the raw amino-acid sequence, 344 residues long: MAALITQEIGSFRKPEYLSMEFHKIEGTEKFKELAERATIDTLKIFENTGLDNVGIGGEMYRWEMYEHPAERIKGLIFYGMVRSFDNRYYRKGSVIDKIERRGSFHMDEVEFVAKSTKKPIKIPITGPYTMMDWSFNDHYNDRHELAMEFARIINEELKEIQSKWPYISNGRKLEIQIDEPATTTHPDEMDIVVDSVNKSIEGIDAELSLHVCYSRDYRLLYDRIPELNIDGYNLEYSNRDTTDLGVEDAKRPGFQDIKYFNEVNESLQRKKFIGVGVTDVHIDFIEPVKLIEDRIKYVLNIIKDPELVKLNPDCGLRTRSRSIGEQKLRNMVIAKNNVLKDIS.

The Zn(2+) site is built by histidine 211, cysteine 213, glutamate 236, and cysteine 315.

The protein belongs to the archaeal MetE family. The cofactor is Zn(2+).

Its pathway is amino-acid biosynthesis; L-methionine biosynthesis via de novo pathway. Catalyzes the transfer of a methyl group to L-homocysteine resulting in methionine formation. The physiological methyl donor is unknown. The protein is Methionine synthase of Thermoplasma volcanium (strain ATCC 51530 / DSM 4299 / JCM 9571 / NBRC 15438 / GSS1).